The sequence spans 543 residues: Reticulophagy regulator 2 (543 aa).

Helical transmembrane passes span 12 to 32 (AGGG…SLGM), 100 to 120 (SLRP…LDLW), and 204 to 224 (VPGI…PLVV). Residues 254 to 265 (LHHKHDKRKRQG) are compositionally biased toward basic residues. The tract at residues 254–287 (LHHKHDKRKRQGKNAPPGGDEPLAETESESEAEL) is disordered. Positions 275–285 (PLAETESESEA) are enriched in acidic residues. Thr-279 bears the Phosphothreonine mark. Phosphoserine is present on residues Ser-281, Ser-283, Ser-291, and Ser-311. Thr-334 bears the Phosphothreonine mark. Disordered stretches follow at residues 336-394 (VSED…DVAA) and 411-486 (HFNG…EEEA). 4 positions are modified to phosphoserine: Ser-337, Ser-344, Ser-347, and Ser-385. Pro residues predominate over residues 461–480 (APSPSILPPVPQDSPQPLPA). The short motif at 490–495 (EDFELL) is the LIR motif element. The segment at 504–543 (NAELGLEPETPPKPPDAPPLGPDIHSLVQSDQEAQAVAEP) is disordered. The segment covering 512–524 (ETPPKPPDAPPLG) has biased composition (pro residues).

Belongs to the RETREG family. In terms of assembly, interacts with ATG8 family modifier proteins MAP1LC3A, MAP1LC3B, MAP1LC3C, GABARAP, GABARAPL1 and GABARAPL2. Shows higher affinity for GABARAPL1 than for MAP1LC3B. Interacts with CANX.

The protein resides in the endoplasmic reticulum membrane. Endoplasmic reticulum (ER)-anchored autophagy regulator which exists in an inactive state under basal conditions but is activated following cellular stress. When activated, induces ER fragmentation and mediates ER delivery into lysosomes through sequestration into autophagosomes via interaction with ATG8 family proteins. Required for collagen quality control in a LIR motif-independent manner. The polypeptide is Reticulophagy regulator 2 (Homo sapiens (Human)).